Consider the following 159-residue polypeptide: Urease accessory protein UreE (159 aa).

Positions 140–159 (GAYHGTGHHHHGHGHDPHHG) are disordered.

Belongs to the UreE family.

It is found in the cytoplasm. Involved in urease metallocenter assembly. Binds nickel. Probably functions as a nickel donor during metallocenter assembly. The protein is Urease accessory protein UreE of Sinorhizobium fredii (strain NBRC 101917 / NGR234).